A 448-amino-acid polypeptide reads, in one-letter code: MDPKYFILILFCGHLNNTFFSKTETITTEKQSQPTLFTSSMSQVLANSQNTTGNPLGQPTQFSDTFSGQSISPAKVTAGQPTPAVYTSSEKPEAHTSAGQPLAYNTKQPTPIANTSSQQAVFTSARQLPSARTSTTQPPKSFVYTFTQQSSSVQIPSRKQITVHNPSTQPTSTVKNSPRSTPGFILDTTSNKQTPQKNNYNSIAAILIGVLLTSMLVAIIIIVLWKCLRKPVLNDQNWAGRSPFADGETPDICMDNIRENEISTKRTSIISLTPWKPSKSTLLADDLEIKLFESSENIEDSNNPKTEKIKDQVNGTSEDSADGSTVGTAVSSSDDADLPPPPPLLDLEGQESNQSDKPTMTIVSPLPNDSTSLPPSLDCLNQDCGDHKSEIIQSFPPLDSLNLPLPPVDFMKNQEDSNLEIQCQEFSIPPNSDQDLNESLPPPPAELL.

The first 21 residues, 1-21, serve as a signal peptide directing secretion; that stretch reads MDPKYFILILFCGHLNNTFFS. N-linked (GlcNAc...) asparagine glycosylation is found at asparagine 16 and asparagine 50. Topologically, residues 22–202 are extracellular; it reads KTETITTEKQ…QTPQKNNYNS (181 aa). The tract at residues 74 to 108 is disordered; the sequence is AKVTAGQPTPAVYTSSEKPEAHTSAGQPLAYNTKQ. Residues 97–108 are compositionally biased toward polar residues; the sequence is SAGQPLAYNTKQ. Asparagine 114 carries an N-linked (GlcNAc...) asparagine glycan. The chain crosses the membrane as a helical span at residues 203–226; it reads IAAILIGVLLTSMLVAIIIIVLWK. Over 227-448 the chain is Cytoplasmic; that stretch reads CLRKPVLNDQ…SLPPPPAELL (222 aa). Threonine 249 carries the post-translational modification Phosphothreonine. Residues serine 268, serine 271, serine 278, and serine 294 each carry the phosphoserine modification. 2 disordered regions span residues 298-372 and 427-448; these read IEDS…DSTS and SIPPNSDQDLNESLPPPPAELL. Composition is skewed to polar residues over residues 313–333 and 350–372; these read VNGTSEDSADGSTVGTAVSSS and QESNQSDKPTMTIVSPLPNDSTS.

In terms of tissue distribution, bone marrow, peripheral blood mononuclear cells, fibroblasts and Epstein-Barr virus-transformed lymphoblastoid cell lines. Strongly expressed in granulocytic cells, and weakly on lymphocytes cells.

The protein resides in the membrane. Functionally, required for granulocyte differentiation and functionality of hematopoietic progenitor cells through the control of cell cycle progression and survival of hematopoietic progenitor cells. The polypeptide is Protein EVI2B (Homo sapiens (Human)).